The primary structure comprises 161 residues: Ureidoglycolate lyase (161 aa).

Belongs to the ureidoglycolate lyase family. As to quaternary structure, homodimer. Ni(2+) is required as a cofactor.

The catalysed reaction is (S)-ureidoglycolate = urea + glyoxylate. It participates in nitrogen metabolism; (S)-allantoin degradation. Its function is as follows. Catalyzes the catabolism of the allantoin degradation intermediate (S)-ureidoglycolate, generating urea and glyoxylate. Involved in the utilization of allantoin as nitrogen source. The chain is Ureidoglycolate lyase from Rhodobacter capsulatus (strain ATCC BAA-309 / NBRC 16581 / SB1003).